A 485-amino-acid chain; its full sequence is Probable glycine dehydrogenase (decarboxylating) subunit 2 (485 aa).

Position 269 is an N6-(pyridoxal phosphate)lysine (Lys-269).

It belongs to the GcvP family. C-terminal subunit subfamily. As to quaternary structure, the glycine cleavage system is composed of four proteins: P, T, L and H. In this organism, the P 'protein' is a heterodimer of two subunits. Pyridoxal 5'-phosphate is required as a cofactor.

It carries out the reaction N(6)-[(R)-lipoyl]-L-lysyl-[glycine-cleavage complex H protein] + glycine + H(+) = N(6)-[(R)-S(8)-aminomethyldihydrolipoyl]-L-lysyl-[glycine-cleavage complex H protein] + CO2. Its function is as follows. The glycine cleavage system catalyzes the degradation of glycine. The P protein binds the alpha-amino group of glycine through its pyridoxal phosphate cofactor; CO(2) is released and the remaining methylamine moiety is then transferred to the lipoamide cofactor of the H protein. This is Probable glycine dehydrogenase (decarboxylating) subunit 2 from Chlorobium phaeovibrioides (strain DSM 265 / 1930) (Prosthecochloris vibrioformis (strain DSM 265)).